The primary structure comprises 374 residues: tRNA (guanine(26)-N(2))-dimethyltransferase (374 aa).

The 368-residue stretch at 4–371 (IEIREGKASL…KEIDEIVNCI (368 aa)) folds into the Trm1 methyltransferase domain. The S-adenosyl-L-methionine site is built by Arg44, Arg69, Asp87, Asp113, and Ala114. Residues Cys244, Cys247, Cys261, and Cys264 each contribute to the Zn(2+) site.

Belongs to the class I-like SAM-binding methyltransferase superfamily. Trm1 family.

It carries out the reaction guanosine(26) in tRNA + 2 S-adenosyl-L-methionine = N(2)-dimethylguanosine(26) in tRNA + 2 S-adenosyl-L-homocysteine + 2 H(+). Functionally, dimethylates a single guanine residue at position 26 of a number of tRNAs using S-adenosyl-L-methionine as donor of the methyl groups. In Sulfurisphaera tokodaii (strain DSM 16993 / JCM 10545 / NBRC 100140 / 7) (Sulfolobus tokodaii), this protein is tRNA (guanine(26)-N(2))-dimethyltransferase.